A 261-amino-acid polypeptide reads, in one-letter code: Phosphate import ATP-binding protein PstB 1 (261 aa).

An ABC transporter domain is found at I8 to V256. G40–S47 contacts ATP.

Belongs to the ABC transporter superfamily. Phosphate importer (TC 3.A.1.7) family. As to quaternary structure, the complex is composed of two ATP-binding proteins (PstB), two transmembrane proteins (PstC and PstA) and a solute-binding protein (PstS).

The protein resides in the cell inner membrane. It carries out the reaction phosphate(out) + ATP + H2O = ADP + 2 phosphate(in) + H(+). Functionally, part of the ABC transporter complex PstSACB involved in phosphate import. Responsible for energy coupling to the transport system. The sequence is that of Phosphate import ATP-binding protein PstB 1 from Nostoc sp. (strain PCC 7120 / SAG 25.82 / UTEX 2576).